The sequence spans 944 residues: 2-oxoglutarate dehydrogenase E1 component (944 aa).

The tract at residues 914–944 (RRRRSSPAEGDPTVHKKEQERIVSDSLTRKN) is disordered. Residues 925-936 (PTVHKKEQERIV) show a composition bias toward basic and acidic residues.

The protein belongs to the alpha-ketoglutarate dehydrogenase family. In terms of assembly, homodimer. Part of the 2-oxoglutarate dehydrogenase (OGDH) complex composed of E1 (2-oxoglutarate dehydrogenase), E2 (dihydrolipoamide succinyltransferase) and E3 (dihydrolipoamide dehydrogenase); the complex contains multiple copies of the three enzymatic components (E1, E2 and E3). Thiamine diphosphate serves as cofactor.

It catalyses the reaction N(6)-[(R)-lipoyl]-L-lysyl-[protein] + 2-oxoglutarate + H(+) = N(6)-[(R)-S(8)-succinyldihydrolipoyl]-L-lysyl-[protein] + CO2. Functionally, E1 component of the 2-oxoglutarate dehydrogenase (OGDH) complex which catalyzes the decarboxylation of 2-oxoglutarate, the first step in the conversion of 2-oxoglutarate to succinyl-CoA and CO(2). The polypeptide is 2-oxoglutarate dehydrogenase E1 component (Bacillus subtilis (strain 168)).